Here is a 317-residue protein sequence, read N- to C-terminus: F-box protein FBW2 (317 aa).

An F-box domain is found at 7 to 54 (FRHWDELIPDALGLIFSHLPLQEVLTVVPRVCKAWNRAVTGPYCWQEI).

Part of a SCF (SKP1-cullin-F-box) protein ligase complex. Interacts with CUL1, CUL2 and SPK1B/ASK2.

The protein localises to the nucleus. It participates in protein modification; protein ubiquitination. Functionally, component of SCF(ASK-cullin-F-box) E3 ubiquitin ligase complexes, which may mediate the ubiquitination and subsequent proteasomal degradation of target proteins. In Arabidopsis thaliana (Mouse-ear cress), this protein is F-box protein FBW2 (FBW2).